A 124-amino-acid chain; its full sequence is Small ribosomal subunit protein uS12 (124 aa).

The segment at 1-32 (MPTIQQLVRKGRQAKASKTKTPALKGSPQRRG) is disordered. A compositionally biased stretch (basic residues) spans 9–18 (RKGRQAKASK). Aspartate 89 is subject to 3-methylthioaspartic acid.

It belongs to the universal ribosomal protein uS12 family. As to quaternary structure, part of the 30S ribosomal subunit. Contacts proteins S8 and S17. May interact with IF1 in the 30S initiation complex.

Its function is as follows. With S4 and S5 plays an important role in translational accuracy. Functionally, interacts with and stabilizes bases of the 16S rRNA that are involved in tRNA selection in the A site and with the mRNA backbone. Located at the interface of the 30S and 50S subunits, it traverses the body of the 30S subunit contacting proteins on the other side and probably holding the rRNA structure together. The combined cluster of proteins S8, S12 and S17 appears to hold together the shoulder and platform of the 30S subunit. This chain is Small ribosomal subunit protein uS12, found in Acidothermus cellulolyticus (strain ATCC 43068 / DSM 8971 / 11B).